A 266-amino-acid polypeptide reads, in one-letter code: Type 1 encapsulin shell protein (266 aa).

It belongs to the encapsulin family. Family 1 subfamily. As to quaternary structure, this encapsulin nanocompartment is formed by 60 subunits; monomers form 12 pentamers which assemble to form shells. Shells are loaded with 4 encapsulated ferritin-like protein decamers (EncFtn) in a tetrahedral arrangement. A 3 nm gap is consistently seen between the shell and the cargo.

The protein resides in the encapsulin nanocompartment. Shell component of a type 1 encapsulin nanocompartment. Assembles into proteinaceous shells about 21 nm in diameter. Small pores form at, or close to, the 2-, 3-, and 5-fold symmetry axes. Data analysis suggests the 5-fold pores open and close with maximal and minimal aperatures of 15 and 5 Angstroms. Cargo protein Fer (ferritin-like protein, probably stores iron) is targeted to the interior via its C-terminal extension; empty intact shells can be isolated in the absence of cargo protein. This Haliangium ochraceum (strain DSM 14365 / JCM 11303 / SMP-2) protein is Type 1 encapsulin shell protein.